Reading from the N-terminus, the 299-residue chain is Tetrahydromethanopterin S-methyltransferase subunit E (299 aa).

6 helical membrane-spanning segments follow: residues 57–79, 95–115, 133–153, 158–178, 237–257, and 262–282; these read AISGEPVSYGLYVAVAGTIAWAL, GVAAVVHGAYSVSAFLGRTVG, IGPIVGHGFIAVFTMTLAAYL, LGNPFPLPLVALIFGITVGAI, GLCFGLIIFLDGWRSILGNII, and VTKTSIALLVGLLVVAVAAGI.

Belongs to the MtrE family. As to quaternary structure, the complex is composed of 8 subunits; MtrA, MtrB, MtrC, MtrD, MtrE, MtrF, MtrG and MtrH.

It is found in the cell membrane. It carries out the reaction 5-methyl-5,6,7,8-tetrahydromethanopterin + coenzyme M + 2 Na(+)(in) = 5,6,7,8-tetrahydromethanopterin + methyl-coenzyme M + 2 Na(+)(out). It participates in one-carbon metabolism; methanogenesis from CO(2); methyl-coenzyme M from 5,10-methylene-5,6,7,8-tetrahydromethanopterin: step 2/2. Part of a complex that catalyzes the formation of methyl-coenzyme M and tetrahydromethanopterin from coenzyme M and methyl-tetrahydromethanopterin. This is an energy-conserving, sodium-ion translocating step. The sequence is that of Tetrahydromethanopterin S-methyltransferase subunit E from Methanococcus maripaludis (strain C5 / ATCC BAA-1333).